Here is a 113-residue protein sequence, read N- to C-terminus: Major basic nuclear protein 1 (113 aa).

The tract at residues Met1–Lys20 is disordered.

It is found in the nucleus. The sequence is that of Major basic nuclear protein 1 (HCc1) from Crypthecodinium cohnii (Dinoflagellate).